Consider the following 142-residue polypeptide: Small heat shock protein IbpB (142 aa).

Positions 26–137 (TGESQSFPPY…APQRIAISER (112 aa)) constitute a sHSP domain.

Belongs to the small heat shock protein (HSP20) family. As to quaternary structure, homodimer. Forms homomultimers of about 100-150 subunits at optimal growth temperatures. Conformation changes to oligomers at high temperatures or high ionic concentrations. The decrease in size of the multimers is accompanied by an increase in chaperone activity.

It localises to the cytoplasm. Functionally, associates with aggregated proteins, together with IbpA, to stabilize and protect them from irreversible denaturation and extensive proteolysis during heat shock and oxidative stress. Aggregated proteins bound to the IbpAB complex are more efficiently refolded and reactivated by the ATP-dependent chaperone systems ClpB and DnaK/DnaJ/GrpE. Its activity is ATP-independent. The sequence is that of Small heat shock protein IbpB from Citrobacter koseri (strain ATCC BAA-895 / CDC 4225-83 / SGSC4696).